We begin with the raw amino-acid sequence, 439 residues long: Transcriptional enhancer factor TEF-5 (439 aa).

Positions 1 to 12 (MASNSWTANSSP) are enriched in polar residues. The interval 1-34 (MASNSWTANSSPGEAREDGSEGLDKGLDNDAEGV) is disordered. The residue at position 2 (A2) is an N-acetylalanine. The segment covering 14 to 28 (EAREDGSEGLDKGLD) has biased composition (basic and acidic residues). The segment at residues 28-104 (DNDAEGVWSP…QVLARKKVRE (77 aa)) is a DNA-binding region (TEA). S148 bears the Phosphoserine mark. The interval 173 to 439 (GPSQDIKPFA…QHHVYKLVKD (267 aa)) is transcriptional activation.

Interacts with YAP1 and WWTR1/TAZ. In terms of tissue distribution, expressed in embryos as well as in many adult tissues.

The protein resides in the nucleus. Its function is as follows. Transcription factor which plays a key role in the Hippo signaling pathway, a pathway involved in organ size control and tumor suppression by restricting proliferation and promoting apoptosis. The core of this pathway is composed of a kinase cascade wherein MST1/MST2, in complex with its regulatory protein SAV1, phosphorylates and activates LATS1/2 in complex with its regulatory protein MOB1, which in turn phosphorylates and inactivates YAP1 oncoprotein and WWTR1/TAZ. Acts by mediating gene expression of YAP1 and WWTR1/TAZ, thereby regulating cell proliferation, migration and epithelial mesenchymal transition (EMT) induction. The chain is Transcriptional enhancer factor TEF-5 (Tead3) from Mus musculus (Mouse).